The sequence spans 509 residues: Aspartic proteinase oryzasin-1 (509 aa).

A signal peptide spans 1–24 (MGTRSVALVLLAAVLLQALLPASA). Positions 25 to 67 (AEGLVRIALKKRPIDENSRVAARLSGEEGARRLGLRGANSLGG) are cleaved as a propeptide — activation peptide. The 422-residue stretch at 85–506 (YFGEIGVGTP…DYGKMRVGFA (422 aa)) folds into the Peptidase A1 domain. The active site involves aspartate 103. Cysteine 116 and cysteine 122 are oxidised to a cystine. Asparagine 252 is a glycosylation site (N-linked (GlcNAc...) asparagine). Residues cysteine 281 and cysteine 285 are joined by a disulfide bond. Aspartate 290 is a catalytic residue. A Saposin B-type domain is found at 315–420 (VVSQECKTVV…NQLCDKLPSP (106 aa)). 4 disulfides stabilise this stretch: cysteine 320/cysteine 414, cysteine 345/cysteine 386, cysteine 351/cysteine 383, and cysteine 428/cysteine 465. Asparagine 400 carries an N-linked (GlcNAc...) asparagine glycan.

Belongs to the peptidase A1 family.

It localises to the vacuole. Involved in the breakdown of propeptides of storage proteins in protein-storage vacuoles. This is Aspartic proteinase oryzasin-1 from Oryza sativa subsp. japonica (Rice).